A 328-amino-acid polypeptide reads, in one-letter code: Peroxidase 71 (328 aa).

The signal sequence occupies residues 1–23 (MGLVRSLCLLITFLNCLIISVHG). 4 disulfides stabilise this stretch: cysteine 44–cysteine 120, cysteine 77–cysteine 82, cysteine 126–cysteine 324, and cysteine 204–cysteine 235. The active-site Proton acceptor is the histidine 75. Ca(2+) contacts are provided by aspartate 76, valine 79, glycine 81, aspartate 83, and serine 85. Position 167 (proline 167) interacts with substrate. Residue histidine 197 participates in heme b binding. Residue threonine 198 participates in Ca(2+) binding. N-linked (GlcNAc...) asparagine glycosylation is present at asparagine 213. The Ca(2+) site is built by aspartate 248, serine 251, and aspartate 256. An N-linked (GlcNAc...) asparagine glycan is attached at asparagine 262.

The protein belongs to the peroxidase family. Classical plant (class III) peroxidase subfamily. Requires heme b as cofactor. Ca(2+) is required as a cofactor. Slightly expressed in roots.

The protein resides in the secreted. It carries out the reaction 2 a phenolic donor + H2O2 = 2 a phenolic radical donor + 2 H2O. Removal of H(2)O(2), oxidation of toxic reductants, biosynthesis and degradation of lignin, suberization, auxin catabolism, response to environmental stresses such as wounding, pathogen attack and oxidative stress. These functions might be dependent on each isozyme/isoform in each plant tissue. The protein is Peroxidase 71 (PER71) of Arabidopsis thaliana (Mouse-ear cress).